The following is a 124-amino-acid chain: Large ribosomal subunit protein uL18 (124 aa).

This sequence belongs to the universal ribosomal protein uL18 family. In terms of assembly, part of the 50S ribosomal subunit; part of the 5S rRNA/L5/L18/L25 subcomplex. Contacts the 5S and 23S rRNAs.

In terms of biological role, this is one of the proteins that bind and probably mediate the attachment of the 5S RNA into the large ribosomal subunit, where it forms part of the central protuberance. This is Large ribosomal subunit protein uL18 from Desulfosudis oleivorans (strain DSM 6200 / JCM 39069 / Hxd3) (Desulfococcus oleovorans).